The following is a 507-amino-acid chain: Putative UDP-glucuronosyltransferase ugt-60 (507 aa).

Positions Met1–Ser15 are cleaved as a signal peptide. Asn312 carries N-linked (GlcNAc...) asparagine glycosylation. A helical transmembrane segment spans residues Tyr379–Ala399.

The protein belongs to the UDP-glycosyltransferase family.

It is found in the membrane. It carries out the reaction glucuronate acceptor + UDP-alpha-D-glucuronate = acceptor beta-D-glucuronoside + UDP + H(+). In Caenorhabditis elegans, this protein is Putative UDP-glucuronosyltransferase ugt-60 (ugt-60).